We begin with the raw amino-acid sequence, 580 residues long: CRISPR-associated exonuclease Cas4/endonuclease Cas1 fusion (580 aa).

The interval 1 to 223 (MAPSDTPPSA…RCSLLPICLP (223 aa)) is CRISPR-associated exonuclease Cas4. C44 provides a ligand contact to [4Fe-4S] cluster. 2 residues coordinate Mn(2+): D112 and E125. [4Fe-4S] cluster-binding residues include C212, C215, and C221. The interval 248-580 (LYGQTPGARI…IPRYPHYCPR (333 aa)) is CRISPR-associated endonuclease Cas1. Residues E401, H472, and E487 each contribute to the Mn(2+) site.

This sequence in the N-terminal section; belongs to the CRISPR-associated exonuclease Cas4 family. It in the C-terminal section; belongs to the CRISPR-associated endonuclease Cas1 family. In terms of assembly, homodimer, forms a heterotetramer with a Cas2 homodimer. [4Fe-4S] cluster is required as a cofactor. It depends on Mg(2+) as a cofactor. Requires Mn(2+) as cofactor.

It carries out the reaction exonucleolytic cleavage in the 5'- to 3'-direction to yield nucleoside 3'-phosphates.. CRISPR (clustered regularly interspaced short palindromic repeat), is an adaptive immune system that provides protection against mobile genetic elements (viruses, transposable elements and conjugative plasmids). CRISPR clusters contain spacers, sequences complementary to antecedent mobile elements, and target invading nucleic acids. CRISPR clusters are transcribed and processed into CRISPR RNA (crRNA). The Cas4 region acts as a ssDNA exonuclease, while the Cas1 region acts as a dsDNA endonuclease. Involved in the integration of spacer DNA into the CRISPR cassette. The polypeptide is CRISPR-associated exonuclease Cas4/endonuclease Cas1 fusion (cas4-cas1) (Rhodospirillum rubrum (strain ATCC 11170 / ATH 1.1.1 / DSM 467 / LMG 4362 / NCIMB 8255 / S1)).